A 369-amino-acid chain; its full sequence is MPDSRDLQLSSYDYVLPEDRIAQAPVEPRHDARLLVVPPAERSLSELRHQRVWDWQQELQPGDLLVVNDTRVLKARLRVRRSGGGLGELLVLEPRGEGRWLCLARPAKRMRPGDQLWLEALEQEPLSLAVLANDAASGGRIVQFPPDCVDALSLEGLLERYGEVPLPPYITRHDSSDQERYQTRYATRPGAVAAPTAGLHLSDALLAAIAERGVALAHVTLHVGLGTFRPVETEDLSDLTLHSEWVEVRAEVVEAVLACRARGGRVIAVGTTSVRALEAAAAGGGGLQPLKGPVDLVIQPGYRFQVVQGLLTNFHLPKSSLLLLVSALIGRDQLLQIYNAAIEEMYRFYSYGDAMWIAPEAVLFDARPE.

This sequence belongs to the QueA family. Monomer.

The protein localises to the cytoplasm. The enzyme catalyses 7-aminomethyl-7-carbaguanosine(34) in tRNA + S-adenosyl-L-methionine = epoxyqueuosine(34) in tRNA + adenine + L-methionine + 2 H(+). The protein operates within tRNA modification; tRNA-queuosine biosynthesis. Transfers and isomerizes the ribose moiety from AdoMet to the 7-aminomethyl group of 7-deazaguanine (preQ1-tRNA) to give epoxyqueuosine (oQ-tRNA). The chain is S-adenosylmethionine:tRNA ribosyltransferase-isomerase from Synechococcus sp. (strain CC9311).